The following is a 66-amino-acid chain: Opicalcin-1 (66 aa).

The signal sequence occupies residues 1-22; it reads MKPSLIIVTFIVVFMAISCVAA. Residues 23-31 constitute a propeptide that is removed on maturation; the sequence is DDEQETWIE. 3 disulfides stabilise this stretch: C36/C50, C43/C54, and C49/C65. The segment at 55–57 is essential for stimulation of [3H]ryanodine binding to RYR1; sequence KRR.

This sequence belongs to the scorpion calcin family. Expressed by the venom gland.

The protein localises to the secreted. In terms of biological role, this toxin stabilizes ryanodine receptor 1 (RyR1) opening in a long-lasting subconductance state (35% of the full conductance state). Furthermore, it triggers calcium release from sarcoplasmic vesicles (2 nM are enough to induce a sharp release, and 67% of the total calcium is released after toxin (100 nM) addition) probably by acting as a cell-penetrating peptide (CPP). In addition, it has been shown to dose-dependently stimulate ryanodine binding to RyR1 (EC(50)=0.3 nM). It also augments the bell-shaped calcium-[3H]ryanodine binding curve that is maximal at about 10 uM calcium concentration. It binds a different site as ryanodine. It acts synergistically with caffeine. In vivo, intracerebroventricular injection into mice induces neurotoxic symptoms, followed by death. The chain is Opicalcin-1 from Opistophthalmus carinatus (African yellow leg scorpion).